Reading from the N-terminus, the 223-residue chain is Endonuclease V (223 aa).

Residues aspartate 45 and aspartate 113 each contribute to the Mg(2+) site.

The protein belongs to the endonuclease V family. Mg(2+) serves as cofactor.

It is found in the cytoplasm. The catalysed reaction is Endonucleolytic cleavage at apurinic or apyrimidinic sites to products with a 5'-phosphate.. Functionally, DNA repair enzyme involved in the repair of deaminated bases. Selectively cleaves double-stranded DNA at the second phosphodiester bond 3' to a deoxyinosine leaving behind the intact lesion on the nicked DNA. This Dehalococcoides mccartyi (strain ATCC BAA-2100 / JCM 16839 / KCTC 5957 / BAV1) protein is Endonuclease V.